The primary structure comprises 83 residues: Mu-conotoxin-like PnMKLT1-014 (83 aa).

The first 22 residues, 1–22 (MNLTCMMIVAVLFLTAWTFVMA), serve as a signal peptide directing secretion. The propeptide occupies 23–50 (DDSNNGLANLFSKSRYEMEDPEPSKLEK). Intrachain disulfides connect Cys-54-Cys-72, Cys-61-Cys-77, and Cys-71-Cys-82.

Belongs to the conotoxin O1 superfamily. Expressed by the venom duct.

The protein localises to the secreted. Mu-conotoxins block voltage-gated sodium channels (Nav). This is Mu-conotoxin-like PnMKLT1-014 from Conus pennaceus (Feathered cone).